The sequence spans 312 residues: Oxidoreductase NAD-binding domain-containing protein 1 (312 aa).

Residues 1–17 (MACAAVMIPGLLRCSVG) form the signal peptide. Residues 50-186 (HMERTASVLR…GGVGINPLLS (137 aa)) form the FAD-binding FR-type domain. 178-183 (GVGINP) lines the NAD(+) pocket.

The chain is Oxidoreductase NAD-binding domain-containing protein 1 (OXNAD1) from Homo sapiens (Human).